Reading from the N-terminus, the 108-residue chain is MTEDFTPNAGYIEVKPPARPRQNIAKDNQQMRLALLRVKRYETAVQRLQEEQDRERQTARQAGRDLIKYTTSVKDHAVPELWGYLPPEKNPYALYEEENKTTGCCVIS.

Cys104 is lipidated: S-palmitoyl cysteine. Cys105 carries the post-translational modification Cysteine methyl ester. Residue Cys105 is the site of S-farnesyl cysteine attachment. Positions 106–108 (VIS) are cleaved as a propeptide — removed in mature form.

Belongs to the G protein gamma family. As to quaternary structure, g proteins are composed of 3 units, alpha, beta and gamma.

It is found in the membrane. The polypeptide is Guanine nucleotide-binding protein subunit gamma (Yarrowia lipolytica (strain CLIB 122 / E 150) (Yeast)).